A 140-amino-acid polypeptide reads, in one-letter code: CBS domain-containing protein YhcV (140 aa).

CBS domains lie at 8 to 64 (MTTQ…GRDG) and 72 to 127 (MSTE…NESA).

This Bacillus subtilis (strain 168) protein is CBS domain-containing protein YhcV (yhcV).